Consider the following 45-residue polypeptide: Large ribosomal subunit protein bL34 (45 aa).

The tract at residues 1 to 45 is disordered; sequence MTKRTLGGTVRKQKRTSGFRARMRSHTGQNVIRARRKKGRHRLTV. Basic residues-rich tracts occupy residues 11-25 and 33-45; these read RKQK…RMRS and RARR…RLTV.

This sequence belongs to the bacterial ribosomal protein bL34 family.

The polypeptide is Large ribosomal subunit protein bL34 (Picosynechococcus sp. (strain ATCC 27264 / PCC 7002 / PR-6) (Agmenellum quadruplicatum)).